We begin with the raw amino-acid sequence, 131 residues long: Large ribosomal subunit protein bL19 (131 aa).

A compositionally biased stretch (polar residues) spans 1-11; it reads MEETMNNQEAP. The disordered stretch occupies residues 1-20; it reads MEETMNNQEAPETSEEETVA.

It belongs to the bacterial ribosomal protein bL19 family.

In terms of biological role, this protein is located at the 30S-50S ribosomal subunit interface and may play a role in the structure and function of the aminoacyl-tRNA binding site. The chain is Large ribosomal subunit protein bL19 from Dehalococcoides mccartyi (strain ATCC BAA-2100 / JCM 16839 / KCTC 5957 / BAV1).